A 176-amino-acid chain; its full sequence is Mitochondrial inner membrane protein Mpv17 (176 aa).

Transmembrane regions (helical) follow at residues 18-38 (VQVL…QQLV), 57-77 (LGCG…DHLI), 94-114 (GGFA…LNGM), and 131-151 (LITN…LVPL).

It belongs to the peroxisomal membrane protein PXMP2/4 family.

It is found in the mitochondrion inner membrane. Functionally, non-selective channel that modulates the membrane potential under normal conditions and oxidative stress, and is involved in mitochondrial homeostasis. Involved in mitochondrial deoxynucleoside triphosphates (dNTP) pool homeostasis and mitochondrial DNA (mtDNA) maintenance. May be involved in the regulation of reactive oxygen species metabolism and the control of oxidative phosphorylation. The protein is Mitochondrial inner membrane protein Mpv17 of Rattus norvegicus (Rat).